We begin with the raw amino-acid sequence, 128 residues long: Cytochrome b (128 aa).

A run of 3 helical transmembrane segments spans residues 25-45, 69-90, and 105-125; these read FGSM…FLAI, WIMQ…YIHI, and WLSG…XMCY. The heme b site is built by His75 and His89. His126 provides a ligand contact to a ubiquinone.

Belongs to the cytochrome b family. In terms of assembly, the cytochrome bc1 complex contains 3 respiratory subunits (MT-CYB, CYC1 and UQCRFS1), 2 core proteins (UQCRC1 and UQCRC2) and probably 6 low-molecular weight proteins. The cofactor is heme b.

The protein resides in the mitochondrion inner membrane. Functionally, component of the ubiquinol-cytochrome c reductase complex (complex III or cytochrome b-c1 complex) that is part of the mitochondrial respiratory chain. The b-c1 complex mediates electron transfer from ubiquinol to cytochrome c. Contributes to the generation of a proton gradient across the mitochondrial membrane that is then used for ATP synthesis. This Crotalus viridis viridis (Prairie rattlesnake) protein is Cytochrome b (MT-CYB).